We begin with the raw amino-acid sequence, 299 residues long: Ribosomal protein L11 methyltransferase (299 aa).

S-adenosyl-L-methionine contacts are provided by threonine 152, glycine 172, aspartate 194, and asparagine 234.

Belongs to the methyltransferase superfamily. PrmA family.

The protein localises to the cytoplasm. It carries out the reaction L-lysyl-[protein] + 3 S-adenosyl-L-methionine = N(6),N(6),N(6)-trimethyl-L-lysyl-[protein] + 3 S-adenosyl-L-homocysteine + 3 H(+). In terms of biological role, methylates ribosomal protein L11. The sequence is that of Ribosomal protein L11 methyltransferase from Geobacter sulfurreducens (strain ATCC 51573 / DSM 12127 / PCA).